A 232-amino-acid polypeptide reads, in one-letter code: Phosphoglycolate phosphatase (232 aa).

The active-site Nucleophile is aspartate 13. Mg(2+) contacts are provided by aspartate 13, aspartate 15, and aspartate 175.

It belongs to the HAD-like hydrolase superfamily. CbbY/CbbZ/Gph/YieH family. As to quaternary structure, monomer. The cofactor is Mg(2+). Chloride serves as cofactor.

It carries out the reaction 2-phosphoglycolate + H2O = glycolate + phosphate. The protein operates within organic acid metabolism; glycolate biosynthesis; glycolate from 2-phosphoglycolate: step 1/1. Specifically catalyzes the dephosphorylation of 2-phosphoglycolate. Is involved in the dissimilation of the intracellular 2-phosphoglycolate formed during the DNA repair of 3'-phosphoglycolate ends, a major class of DNA lesions induced by oxidative stress. The polypeptide is Phosphoglycolate phosphatase (Yersinia pestis).